The chain runs to 215 residues: Flavin-dependent thymidylate synthase (215 aa).

Residues 1-215 (MDVRFISLTK…FPTVAAALEW (215 aa)) form the ThyX domain. Residues S56, 79–81 (RHR), and E87 contribute to the FAD site. DUMP is bound by residues 76-79 (QILR), 87-91 (EFSLR), and R155. A ThyX motif motif is present at residues 79-89 (RHRSFSFQEFS). H177 serves as a coordination point for FAD. Residue R182 coordinates dUMP. The active-site Involved in ionization of N3 of dUMP, leading to its activation is R182.

It belongs to the thymidylate synthase ThyX family. As to quaternary structure, homotetramer. It depends on FAD as a cofactor.

It carries out the reaction dUMP + (6R)-5,10-methylene-5,6,7,8-tetrahydrofolate + NADPH + H(+) = dTMP + (6S)-5,6,7,8-tetrahydrofolate + NADP(+). It participates in pyrimidine metabolism; dTTP biosynthesis. In terms of biological role, catalyzes the reductive methylation of 2'-deoxyuridine-5'-monophosphate (dUMP) to 2'-deoxythymidine-5'-monophosphate (dTMP) while utilizing 5,10-methylenetetrahydrofolate (mTHF) as the methyl donor, and NADPH and FADH(2) as the reductant. This Synechocystis sp. (strain ATCC 27184 / PCC 6803 / Kazusa) protein is Flavin-dependent thymidylate synthase.